A 37-amino-acid polypeptide reads, in one-letter code: Large ribosomal subunit protein bL36 (37 aa).

This sequence belongs to the bacterial ribosomal protein bL36 family.

The protein is Large ribosomal subunit protein bL36 (rpmJ) of Mycoplasmoides gallisepticum (strain R(low / passage 15 / clone 2)) (Mycoplasma gallisepticum).